We begin with the raw amino-acid sequence, 148 residues long: MFIKVMFGAGCSVLVNTSCRLVNLTAHLRQKAGLPPDATIALLAEDGNLVSLEEDLKEGASRAQTMGNSLLKERAIYVLVRIIKGEDMASTRYESLLENLDDHYPELAEELRRLSGLSSVGHNWRKRMGTRRGRHEQSPTSRPRKGPD.

The segment at 122 to 148 (HNWRKRMGTRRGRHEQSPTSRPRKGPD) is disordered. A compositionally biased stretch (basic residues) spans 123–134 (NWRKRMGTRRGR).

This is an uncharacterized protein from Homo sapiens (Human).